Reading from the N-terminus, the 326-residue chain is Probable cell division protein WhiA (326 aa).

The H-T-H motif DNA-binding region spans 275–308 (SLDELGHHADPPMTKDAVAGRIRRLLAMADKKAV).

The protein belongs to the WhiA family.

Its function is as follows. Involved in cell division and chromosome segregation. The sequence is that of Probable cell division protein WhiA from Clavibacter michiganensis subsp. michiganensis (strain NCPPB 382).